We begin with the raw amino-acid sequence, 60 residues long: Putative transcriptional regulator XtpA (60 aa).

Controls the expression of small non-coding RNA GcvB, which represses the expression of many amino acid transporter proteins and uptake of aminoglycoside antibiotics in cells. Might be a transcriptional activator. An RNA (xtr) with a tRNA-like fold possibly derived from tRNA-Arg(UCG) is encoded entirely within the protein; xtr does not have the sequence corresponding to tRNA anticodon or variable arms. 10 synonymous codon changes in the xtr region of xtpA have the same phenotype as a deletion mutation, suggesting the mRNA secondary structure is important for function. In Escherichia coli (strain K12), this protein is Putative transcriptional regulator XtpA.